Consider the following 881-residue polypeptide: Phosphoenolpyruvate carboxylase (881 aa).

Catalysis depends on residues His142 and Lys547.

Belongs to the PEPCase type 1 family. The cofactor is Mg(2+).

The catalysed reaction is oxaloacetate + phosphate = phosphoenolpyruvate + hydrogencarbonate. Its function is as follows. Forms oxaloacetate, a four-carbon dicarboxylic acid source for the tricarboxylic acid cycle. The protein is Phosphoenolpyruvate carboxylase of Hahella chejuensis (strain KCTC 2396).